Here is a 179-residue protein sequence, read N- to C-terminus: Ribosome maturation factor RimM (179 aa).

The 80-residue stretch at 95 to 174 (KDEFFYFDIL…QIFCTQDAFL (80 aa)) folds into the PRC barrel domain.

Belongs to the RimM family. As to quaternary structure, binds ribosomal protein uS19.

The protein resides in the cytoplasm. Functionally, an accessory protein needed during the final step in the assembly of 30S ribosomal subunit, possibly for assembly of the head region. Essential for efficient processing of 16S rRNA. May be needed both before and after RbfA during the maturation of 16S rRNA. It has affinity for free ribosomal 30S subunits but not for 70S ribosomes. The sequence is that of Ribosome maturation factor RimM from Campylobacter jejuni subsp. jejuni serotype O:6 (strain 81116 / NCTC 11828).